We begin with the raw amino-acid sequence, 433 residues long: Myricetin 3-O-glucosyl 1,2-rhamnoside 6'-O-caffeoyltransferase AT2 (433 aa).

Residues His157 and Asp375 each act as proton acceptor in the active site.

Belongs to the plant acyltransferase family. In terms of tissue distribution, expressed in young cromes.

The catalysed reaction is myricetin 3-O-[beta-D-glucosyl-(1-&gt;2)-alpha-L-rhamnoside] + (E)-caffeoyl-CoA = myricetin 3-O-[(6-O-(E)-caffeoyl-beta-D-glucosyl)-(1-&gt;2)-alpha-L-rhamnoside] + CoA. It functions in the pathway flavonoid metabolism. Its function is as follows. Caffeoyltransferase involved in montbretin A (MbA) biosynthesis. Catalyzes the caffeoylation of myricetin 3-O-beta-D-glucosyl 1,2-alpha-L-rhamnoside (MRG) to produce myricetin 3-O-(6'-O-caffeoyl)-beta-D-glucosyl 1,2-alpha-L-rhamnoside (mini-MbA), a precursor of MbA. Mini-MbA and MbA are potent inhibitors of human pancreatic alpha-amylase and are being developed as drug candidates to treat type-2 diabetes. In vitro, is able to catalyze the caffeoylation of quercetin 3-O-sophoroside (QGG), although QGG may not be a physiological substrate in vivo. In vitro, can use coumaryl-CoA, feruloyl-CoA and acetyl-CoA, although these three acyl donors may not be physiological in vivo. This chain is Myricetin 3-O-glucosyl 1,2-rhamnoside 6'-O-caffeoyltransferase AT2, found in Crocosmia x crocosmiiflora (Montbretia).